Here is a 21-residue protein sequence, read N- to C-terminus: Fibrinogen beta chain (21 aa).

A Pyrrolidone carboxylic acid modification is found at glutamine 1. Tyrosine 6 is subject to Sulfotyrosine.

Heterohexamer; disulfide linked. Contains 2 sets of 3 non-identical chains (alpha, beta and gamma). The 2 heterotrimers are in head to head conformation with the N-termini in a small central domain. Post-translationally, conversion of fibrinogen to fibrin is triggered by thrombin, which cleaves fibrinopeptides A and B from alpha and beta chains, and thus exposes the N-terminal polymerization sites responsible for the formation of the soft clot.

The protein resides in the secreted. In terms of biological role, cleaved by the protease thrombin to yield monomers which, together with fibrinogen alpha (FGA) and fibrinogen gamma (FGG), polymerize to form an insoluble fibrin matrix. Fibrin has a major function in hemostasis as one of the primary components of blood clots. In addition, functions during the early stages of wound repair to stabilize the lesion and guide cell migration during re-epithelialization. Was originally thought to be essential for platelet aggregation, based on in vitro studies using anticoagulated blood. However subsequent studies have shown that it is not absolutely required for thrombus formation in vivo. Enhances expression of SELP in activated platelets. Maternal fibrinogen is essential for successful pregnancy. Fibrin deposition is also associated with infection, where it protects against IFNG-mediated hemorrhage. May also facilitate the antibacterial immune response via both innate and T-cell mediated pathways. In Rangifer tarandus (Reindeer), this protein is Fibrinogen beta chain (FGB).